A 115-amino-acid polypeptide reads, in one-letter code: Large ribosomal subunit protein bL19 (115 aa).

The protein belongs to the bacterial ribosomal protein bL19 family.

Functionally, this protein is located at the 30S-50S ribosomal subunit interface and may play a role in the structure and function of the aminoacyl-tRNA binding site. The protein is Large ribosomal subunit protein bL19 of Streptococcus pneumoniae (strain JJA).